We begin with the raw amino-acid sequence, 757 residues long: RNA-directed RNA polymerase catalytic subunit (757 aa).

The interval 52–82 is disordered; it reads KGKWTTNTETGAPQLNPIDGPLPEDNEPSGY. A compositionally biased stretch (polar residues) spans 55-64; that stretch reads WTTNTETGAP. 2 consecutive short sequence motifs (nuclear localization signal) follow at residues 187–195 and 203–216; these read RKRRVRDNM and RTIGKKKQRLNKKS. The tract at residues 249 to 256 is promoter-binding site; sequence RGFVYFVE. One can recognise a RdRp catalytic domain in the interval 286 to 483; sequence VRKMMTNSQD…GINMSKKKSY (198 aa).

This sequence belongs to the influenza viruses polymerase PB1 family. In terms of assembly, influenza RNA polymerase is composed of three subunits: PB1, PB2 and PA. Interacts (via N-terminus) with PA (via C-terminus). Interacts (via C-terminus) with PB2 (via N-terminus); this interaction is essential for transcription initiation. Phosphorylated by host PRKCA.

It localises to the host nucleus. Its subcellular location is the host cytoplasm. It catalyses the reaction RNA(n) + a ribonucleoside 5'-triphosphate = RNA(n+1) + diphosphate. RNA-dependent RNA polymerase which is responsible for replication and transcription of virus RNA segments. The transcription of viral mRNAs occurs by a unique mechanism called cap-snatching. 5' methylated caps of cellular mRNAs are cleaved after 10-13 nucleotides by PA. In turn, these short capped RNAs are used as primers by PB1 for transcription of viral mRNAs. During virus replication, PB1 initiates RNA synthesis and copy vRNA into complementary RNA (cRNA) which in turn serves as a template for the production of more vRNAs. The sequence is that of RNA-directed RNA polymerase catalytic subunit from Aves (Cat).